Consider the following 469-residue polypeptide: Dihydrolipoyl dehydrogenase (469 aa).

Residues 34–42 (EKQYWGGVC), Lys51, and Gly114 contribute to the FAD site. Cysteines 42 and 47 form a disulfide. NAD(+)-binding positions include 179–183 (GAGAI), Glu202, and 269–272 (SVGF). 2 residues coordinate FAD: Asp312 and Ala320. His448 acts as the Proton acceptor in catalysis.

It belongs to the class-I pyridine nucleotide-disulfide oxidoreductase family. In terms of assembly, homodimer. Part of an unusual ODH/PDH supercomplex, consisting of AceE (E1), AceF (E2), and Lpd (E3) together with OdhA (E1+E2). The cofactor is FAD.

The protein localises to the cytoplasm. It carries out the reaction N(6)-[(R)-dihydrolipoyl]-L-lysyl-[protein] + NAD(+) = N(6)-[(R)-lipoyl]-L-lysyl-[protein] + NADH + H(+). It participates in carbohydrate metabolism; tricarboxylic acid cycle; succinyl-CoA from 2-oxoglutarate (dehydrogenase route): step 1/1. Functionally, lipoamide dehydrogenase is an essential component of the pyruvate dehydrogenase (PDH) and 2-oxoglutarate dehydrogenase (ODH) complexes. Catalyzes the reoxidation of dihydrolipoyl groups which are covalently attached to the lipoate acyltransferase components (E2) of the complexes. Also catalyzes a reversible NADH:NAD(+) transhydrogenation, and is able to transfer electrons from NADH to various redox-active compounds and quinones. May be involved in quinone redox cycling in C.glutamicum. The protein is Dihydrolipoyl dehydrogenase (lpd) of Corynebacterium glutamicum (strain ATCC 13032 / DSM 20300 / JCM 1318 / BCRC 11384 / CCUG 27702 / LMG 3730 / NBRC 12168 / NCIMB 10025 / NRRL B-2784 / 534).